We begin with the raw amino-acid sequence, 296 residues long: Ribosomal protein L11 methyltransferase (296 aa).

The S-adenosyl-L-methionine site is built by Thr151, Gly172, Asp194, and Asn233.

This sequence belongs to the methyltransferase superfamily. PrmA family.

The protein resides in the cytoplasm. The enzyme catalyses L-lysyl-[protein] + 3 S-adenosyl-L-methionine = N(6),N(6),N(6)-trimethyl-L-lysyl-[protein] + 3 S-adenosyl-L-homocysteine + 3 H(+). In terms of biological role, methylates ribosomal protein L11. The protein is Ribosomal protein L11 methyltransferase of Thiobacillus denitrificans (strain ATCC 25259 / T1).